Here is a 503-residue protein sequence, read N- to C-terminus: Guanosine-5'-triphosphate,3'-diphosphate pyrophosphatase (503 aa).

The protein belongs to the GppA/Ppx family. GppA subfamily.

It catalyses the reaction guanosine 3'-diphosphate 5'-triphosphate + H2O = guanosine 3',5'-bis(diphosphate) + phosphate + H(+). It participates in purine metabolism; ppGpp biosynthesis; ppGpp from GTP: step 2/2. In terms of biological role, catalyzes the conversion of pppGpp to ppGpp. Guanosine pentaphosphate (pppGpp) is a cytoplasmic signaling molecule which together with ppGpp controls the 'stringent response', an adaptive process that allows bacteria to respond to amino acid starvation, resulting in the coordinated regulation of numerous cellular activities. The sequence is that of Guanosine-5'-triphosphate,3'-diphosphate pyrophosphatase from Pseudoalteromonas atlantica (strain T6c / ATCC BAA-1087).